The sequence spans 591 residues: Aspartate--tRNA ligase (591 aa).

Residue Glu-171 participates in L-aspartate binding. The tract at residues 195–198 (QLFK) is aspartate. An L-aspartate-binding site is contributed by Arg-217. Residues 217–219 (RDE) and Gln-226 each bind ATP. Residue His-448 participates in L-aspartate binding. Glu-482 serves as a coordination point for ATP. Position 489 (Arg-489) interacts with L-aspartate. 534-537 (GLDR) contacts ATP.

This sequence belongs to the class-II aminoacyl-tRNA synthetase family. Type 1 subfamily. As to quaternary structure, homodimer.

Its subcellular location is the cytoplasm. It catalyses the reaction tRNA(Asp) + L-aspartate + ATP = L-aspartyl-tRNA(Asp) + AMP + diphosphate. Functionally, catalyzes the attachment of L-aspartate to tRNA(Asp) in a two-step reaction: L-aspartate is first activated by ATP to form Asp-AMP and then transferred to the acceptor end of tRNA(Asp). This Vibrio cholerae serotype O1 (strain ATCC 39541 / Classical Ogawa 395 / O395) protein is Aspartate--tRNA ligase.